A 175-amino-acid polypeptide reads, in one-letter code: Type II restriction enzyme NgoBV (175 aa).

The catalysed reaction is Endonucleolytic cleavage of DNA to give specific double-stranded fragments with terminal 5'-phosphates.. Its function is as follows. A P subtype restriction enzyme that recognizes the double-stranded sequence 5'-GGNNCC-3'; the cleavage site is unknown. This is Type II restriction enzyme NgoBV (ngoBVR) from Neisseria gonorrhoeae.